Consider the following 274-residue polypeptide: Cytochrome c oxidase subunit 3 (274 aa).

The Mitochondrial matrix portion of the chain corresponds to 1-15 (MTHQTHAYHMVNPSP). Residues 16–34 (WPLTGALSALLMTSGLAMW) form a helical membrane-spanning segment. The Mitochondrial intermembrane segment spans residues 35–40 (FHFNSS). A helical transmembrane segment spans residues 41–66 (MLLSLGMLTNLLTMYQWWRDIVREGT). Topologically, residues 67–72 (FQGHHT) are mitochondrial matrix. The chain crosses the membrane as a helical span at residues 73–105 (SIVQKGLRYGMVLFIISEIFFFAGFFWAFYHSS). The Mitochondrial intermembrane segment spans residues 106 to 128 (LAPTPELGGCWPPTGIHPLNPLE). A helical transmembrane segment spans residues 129-152 (VPLLNTAVLLASGVSITWAHHSLM). The Mitochondrial matrix segment spans residues 153–155 (EGN). Residues 156 to 183 (RVQMLQALLITITLGLYFTLLQASEYFE) traverse the membrane as a helical segment. At 184–190 (TSFTISD) the chain is on the mitochondrial intermembrane side. Residues 191–223 (GVYGSTFFMATGFHGLHVIIGSTFLTVCFFRQL) form a helical membrane-spanning segment. Residues 224–232 (SFHFTSNHH) lie on the Mitochondrial matrix side of the membrane. The chain crosses the membrane as a helical span at residues 233 to 256 (FGFEAAAWYWHFVDVVWLFLYVSI). Residues 257–274 (YWWGSYSFSIDPMQLTSN) are Mitochondrial intermembrane-facing.

It belongs to the cytochrome c oxidase subunit 3 family. Component of the cytochrome c oxidase (complex IV, CIV), a multisubunit enzyme composed of 14 subunits. The complex is composed of a catalytic core of 3 subunits MT-CO1, MT-CO2 and MT-CO3, encoded in the mitochondrial DNA, and 11 supernumerary subunits COX4I, COX5A, COX5B, COX6A, COX6B, COX6C, COX7A, COX7B, COX7C, COX8 and NDUFA4, which are encoded in the nuclear genome. The complex exists as a monomer or a dimer and forms supercomplexes (SCs) in the inner mitochondrial membrane with NADH-ubiquinone oxidoreductase (complex I, CI) and ubiquinol-cytochrome c oxidoreductase (cytochrome b-c1 complex, complex III, CIII), resulting in different assemblies (supercomplex SCI(1)III(2)IV(1) and megacomplex MCI(2)III(2)IV(2)).

It is found in the mitochondrion inner membrane. It catalyses the reaction 4 Fe(II)-[cytochrome c] + O2 + 8 H(+)(in) = 4 Fe(III)-[cytochrome c] + 2 H2O + 4 H(+)(out). Functionally, component of the cytochrome c oxidase, the last enzyme in the mitochondrial electron transport chain which drives oxidative phosphorylation. The respiratory chain contains 3 multisubunit complexes succinate dehydrogenase (complex II, CII), ubiquinol-cytochrome c oxidoreductase (cytochrome b-c1 complex, complex III, CIII) and cytochrome c oxidase (complex IV, CIV), that cooperate to transfer electrons derived from NADH and succinate to molecular oxygen, creating an electrochemical gradient over the inner membrane that drives transmembrane transport and the ATP synthase. Cytochrome c oxidase is the component of the respiratory chain that catalyzes the reduction of oxygen to water. Electrons originating from reduced cytochrome c in the intermembrane space (IMS) are transferred via the dinuclear copper A center (CU(A)) of subunit 2 and heme A of subunit 1 to the active site in subunit 1, a binuclear center (BNC) formed by heme A3 and copper B (CU(B)). The BNC reduces molecular oxygen to 2 water molecules using 4 electrons from cytochrome c in the IMS and 4 protons from the mitochondrial matrix. In Lemur catta (Ring-tailed lemur), this protein is Cytochrome c oxidase subunit 3 (MT-CO3).